The following is a 62-amino-acid chain: Large ribosomal subunit protein uL30 (62 aa).

Belongs to the universal ribosomal protein uL30 family. In terms of assembly, part of the 50S ribosomal subunit.

This Beutenbergia cavernae (strain ATCC BAA-8 / DSM 12333 / CCUG 43141 / JCM 11478 / NBRC 16432 / NCIMB 13614 / HKI 0122) protein is Large ribosomal subunit protein uL30.